We begin with the raw amino-acid sequence, 484 residues long: Cobyric acid synthase (484 aa).

A GATase cobBQ-type domain is found at 249-438 (QLRVAVPVFT…LHGIFDRPET (190 aa)). The Nucleophile role is filled by Cys330. Residue His430 is part of the active site.

Belongs to the CobB/CobQ family. CobQ subfamily.

It participates in cofactor biosynthesis; adenosylcobalamin biosynthesis. Catalyzes amidations at positions B, D, E, and G on adenosylcobyrinic A,C-diamide. NH(2) groups are provided by glutamine, and one molecule of ATP is hydrogenolyzed for each amidation. This Vibrio cholerae serotype O1 (strain ATCC 39315 / El Tor Inaba N16961) protein is Cobyric acid synthase.